We begin with the raw amino-acid sequence, 240 residues long: Mannose-binding protein C (240 aa).

An N-terminal signal peptide occupies residues 1–18 (MSLFPSLHLLLLIVMTAS). Collagen-like domains are found at residues 39 to 61 (SPGINGLPGKDGLDGAKGEKGEP) and 67 to 97 (GLQGLPGMVGPQGSPGIPGLPGLKGQKGDSG). A Hydroxyproline modification is found at Pro-46. The disordered stretch occupies residues 48-102 (KDGLDGAKGEKGEPGQGLIGLQGLPGMVGPQGSPGIPGLPGLKGQKGDSGIDPGN). The segment covering 49–60 (DGLDGAKGEKGE) has biased composition (basic and acidic residues). Hydroxyproline occurs at positions 72, 81, and 87. Residues 104 to 122 (LANLRSELDNIKKWLIFAQ) are a coiled coil. In terms of domain architecture, C-type lectin spans 126-237 (VGKKLYLTNG…CSSQLSAVCE (112 aa)). Cystine bridges form between Cys-147-Cys-236 and Cys-214-Cys-228.

Interacts with MASP1 and MASP2. Interacts with MEP1A and MEP1B and may inhibit their catalytic activity. Forms oligomeric complexes of 2 or 3 homotrimers. Expressed in liver. Weakly expressed in kidney and testis.

The protein resides in the secreted. Functionally, calcium-dependent lectin involved in innate immune defense. Binds mannose, fucose and N-acetylglucosamine on different microorganisms and activates the lectin complement pathway. Binds to late apoptotic cells, as well as to apoptotic blebs and to necrotic cells, but not to early apoptotic cells, facilitating their uptake by macrophages. According to some authors, it only binds mannose. This is Mannose-binding protein C from Sus scrofa (Pig).